The following is a 198-amino-acid chain: Large ribosomal subunit protein bL21 (198 aa).

This sequence belongs to the bacterial ribosomal protein bL21 family. Part of the 50S ribosomal subunit. Contacts protein L20.

Functionally, this protein binds to 23S rRNA in the presence of protein L20. This chain is Large ribosomal subunit protein bL21, found in Ruegeria sp. (strain TM1040) (Silicibacter sp.).